We begin with the raw amino-acid sequence, 70 residues long: Probable rubredoxin HupI (70 aa).

One can recognise a Rubredoxin-like domain in the interval 15–66 (DDRMECGICWHVYDPAEGDPVWQIPPGTPFSNLTEDWRCPNCDALQSKFMRL). The Fe cation site is built by Cys20, Cys23, Cys53, and Cys56.

The protein belongs to the rubredoxin family. Fe(3+) is required as a cofactor.

Functionally, could be an electron transport intermediate in hydrogen oxidation. The polypeptide is Probable rubredoxin HupI (hupI) (Rhizobium leguminosarum bv. viciae).